Consider the following 125-residue polypeptide: MPREQKQVRELQEGSYVMMDSSPCKINHYSTAKPGKHGSAKARVEGKGVFDEKKRSLSQPVDAKVWVPIIQRKQGQVVSVSGDDAQVMDLDTYETFTMRIPEGEDFTSDDNIEYLEYEGQRKVVG.

At Lys-36 the chain carries Hypusine.

This sequence belongs to the eIF-5A family.

The protein resides in the cytoplasm. In terms of biological role, functions by promoting the formation of the first peptide bond. This is Translation initiation factor 5A (eIF5A) from Halorubrum lacusprofundi (strain ATCC 49239 / DSM 5036 / JCM 8891 / ACAM 34).